A 437-amino-acid polypeptide reads, in one-letter code: Phosphomethylpyrimidine synthase (437 aa).

Residues N69, M98, Y127, H163, 185–187 (SRG), 226–229 (DACR), and E265 contribute to the substrate site. H269 is a binding site for Zn(2+). Substrate is bound at residue Y292. H333 is a binding site for Zn(2+). [4Fe-4S] cluster is bound by residues C409, C412, and C416.

Belongs to the ThiC family. [4Fe-4S] cluster serves as cofactor.

It carries out the reaction 5-amino-1-(5-phospho-beta-D-ribosyl)imidazole + S-adenosyl-L-methionine = 4-amino-2-methyl-5-(phosphooxymethyl)pyrimidine + CO + 5'-deoxyadenosine + formate + L-methionine + 3 H(+). The protein operates within cofactor biosynthesis; thiamine diphosphate biosynthesis. Catalyzes the synthesis of the hydroxymethylpyrimidine phosphate (HMP-P) moiety of thiamine from aminoimidazole ribotide (AIR) in a radical S-adenosyl-L-methionine (SAM)-dependent reaction. The polypeptide is Phosphomethylpyrimidine synthase (Clostridium botulinum (strain 657 / Type Ba4)).